A 20-amino-acid chain; its full sequence is Ranalexin-1Cb (20 aa).

A disulfide bridge links Cys-14 with Cys-20.

Expressed by the skin glands.

The protein localises to the secreted. Antibacterial activity against Gram-positive bacterium S.aureus and Gram-negative bacterium E.coli. Has activity against C.albicans. The sequence is that of Ranalexin-1Cb from Lithobates clamitans (Green frog).